A 298-amino-acid polypeptide reads, in one-letter code: Enoyl-CoA hydratase AFT6-1 (298 aa).

The disordered stretch occupies residues 1-39; sequence MTYSTTKSVAMNPDEDAPPSDINSSGRLMSHSEVEPRGN.

The protein belongs to the enoyl-CoA hydratase/isomerase family.

The enzyme catalyses a (3S)-3-hydroxyacyl-CoA = a (2E)-enoyl-CoA + H2O. It catalyses the reaction a 4-saturated-(3S)-3-hydroxyacyl-CoA = a (3E)-enoyl-CoA + H2O. It functions in the pathway mycotoxin biosynthesis. In terms of biological role, enoyl-CoA hydratase; part of the gene clusters that mediate the biosynthesis of the host-selective toxins (HSTs) AF-toxins responsible for Alternaria black spot of strawberry disease by the strawberry pathotype. AF-toxin I and III are valine derivatives of 2,3-dyhydroxy-isovaleric acid and 2-hydroxy-isovaleric acid respectively, while AF II is an isoleucine derivative of 2-hydroxy-valeric acid. These derivatives are bound to a 9,10-epoxy-8-hydroxy-9-methyl-decatrienoic acid (EDA) moiety. On cellular level, AF-toxin affects plasma membrane of susceptible cells and cause a sudden increase in loss of K(+) after a few minutes of toxin treatment. The aldo-keto reductase AFTS1 catalyzes the conversion of 2-keto-isovaleric acid (2-KIV) to 2-hydroxy-isovaleric acid (2-HIV) by reduction of its ketone to an alcohol. The acyl-CoA ligase AFT1, the hydrolase AFT2 and the enoyl-CoA hydratases AFT3 and AFT6, but also the polyketide synthase AFT9, the acyl-CoA dehydrogenase AFT10, the cytochrome P450 monooxygenase AFT11 and the oxidoreductase AFT12 are all involved in the biosynthesis of the AK-, AF- and ACT-toxin common EDA structural moiety. The exact function of each enzyme, and of additional enzymes identified within the AF-toxin clusters have still to be determined. The sequence is that of Enoyl-CoA hydratase AFT6-1 from Alternaria alternata (Alternaria rot fungus).